A 643-amino-acid chain; its full sequence is Protein disulfide-isomerase A4 (643 aa).

Residues 1 to 20 (MRPRKAWMLVLLLALVQLLA) form the signal peptide. Thioredoxin domains lie at 21–168 (VASA…EVSQ) and 170–300 (NWTP…EFLK). Residues 24–54 (AGAPDEDSTDKEDAIEEDEEEDEDDDDDDDD) are disordered. The span at 27–54 (PDEDSTDKEDAIEEDEEEDEDDDDDDDD) shows a compositional bias: acidic residues. A CXXC motif is present at residues 90-93 (CGHC). 2 disulfides stabilise this stretch: C90-C93 and C205-C208. At K365 the chain carries N6-acetyllysine. The region spanning 503–634 (FKKGKLKPVI…LSKFIEEHAT (132 aa)) is the Thioredoxin 3 domain. Positions 553–556 (CGHC) match the CXXC motif. C553 and C556 are disulfide-bonded. Positions 640-643 (KEEL) match the Prevents secretion from ER motif.

This sequence belongs to the protein disulfide isomerase family. Part of a large chaperone multiprotein complex comprising DNAJB11, HSP90B1, HSPA5, HYOU, PDIA2, PDIA4, PDIA6, PPIB, SDF2L1, UGGT1 and very small amounts of ERP29, but not, or at very low levels, CALR nor CANX. Component of a complex containing at least CRELD2, MANF, MATN3 and PDIA4.

Its subcellular location is the endoplasmic reticulum lumen. It is found in the melanosome. The enzyme catalyses Catalyzes the rearrangement of -S-S- bonds in proteins.. The protein is Protein disulfide-isomerase A4 (PDIA4) of Bos taurus (Bovine).